The following is a 141-amino-acid chain: MTQAFMSYEELLERAYSMLPRRRRRSTGERFVLPTFEVSKTGKKVYIHNFKDVAEKLNREPPVLLRFILKEIALPGVYENGTAVIHGEVSAQTLNKLLERFYNEYVKCPVCEAPDTILVKEKKLMYIKCTACGAVSPVKPF.

Belongs to the eIF-2-beta/eIF-5 family. Heterotrimer composed of an alpha, a beta and a gamma chain.

Its function is as follows. eIF-2 functions in the early steps of protein synthesis by forming a ternary complex with GTP and initiator tRNA. This is Translation initiation factor 2 subunit beta from Thermofilum pendens (strain DSM 2475 / Hrk 5).